The primary structure comprises 72 residues: MDTRTPEVPCGDLLQNAAENLLLEVEEHFQALTTTLNLRMEEMGSRIEDLQRNVDDLMTQAGIENSIKEPAT.

Residues 12–62 (DLLQNAAENLLLEVEEHFQALTTTLNLRMEEMGSRIEDLQRNVDDLMTQAG) are a coiled coil.

This sequence belongs to the HSBP1 family.

This chain is Heat shock factor-binding protein 1-like protein 1 (Hsbp1l1), found in Mus musculus (Mouse).